Here is a 423-residue protein sequence, read N- to C-terminus: DUF21 domain-containing protein At2g14520 (423 aa).

Residues 1 to 11 are Extracellular-facing; it reads MAVEYECCGTS. The 184-residue stretch at 8–191 folds into the CNNM transmembrane domain; sequence CGTSFFIHIA…GKGGELTHDE (184 aa). The helical transmembrane segment at 12-32 threads the bilayer; the sequence is FFIHIAVIVLLVLFAGLMSGL. Residues 33–70 are Cytoplasmic-facing; the sequence is TLGLMSMSLVDLEVLAKSGTPRDRIHAAKILPVVKNQH. The chain crosses the membrane as a helical span at residues 71–91; it reads LLLCTLLICNAAAMEALPIFL. Residues 92-94 are Extracellular-facing; that stretch reads DAL. Residues 95 to 115 form a helical membrane-spanning segment; it reads VTAWGAILISVTLILLFGEII. Residues 116–136 are Cytoplasmic-facing; sequence PQSVCSRHGLAIGATVAPFVR. Residues 137–157 traverse the membrane as a helical segment; sequence VLVWICLPVAWPISKLLDFLL. The Extracellular segment spans residues 158 to 423; sequence GHGRVALFRR…DETDHHFEDL (266 aa). One can recognise a CBS 1 domain in the interval 210-271; that stretch reads MTPISDTFVI…TINPDEEIQV (62 aa). 2 N-linked (GlcNAc...) asparagine glycosylation sites follow: Asn273 and Asn322. 2 CBS domains span residues 275-332 and 356-415; these read TIRR…RVDV and PNRA…IFDE.

It localises to the membrane. This Arabidopsis thaliana (Mouse-ear cress) protein is DUF21 domain-containing protein At2g14520 (CBSDUF3).